The primary structure comprises 940 residues: Phosphoenolpyruvate carboxylase (940 aa).

Catalysis depends on residues His-138 and Lys-603.

The protein belongs to the PEPCase type 1 family. Mg(2+) serves as cofactor.

The catalysed reaction is oxaloacetate + phosphate = phosphoenolpyruvate + hydrogencarbonate. Its function is as follows. Forms oxaloacetate, a four-carbon dicarboxylic acid source for the tricarboxylic acid cycle. This Streptococcus thermophilus (strain ATCC BAA-250 / LMG 18311) protein is Phosphoenolpyruvate carboxylase.